Consider the following 720-residue polypeptide: 1,4-alpha-glucan branching enzyme GlgB 2 (720 aa).

The active-site Nucleophile is the aspartate 398. The active-site Proton donor is the glutamate 451.

The protein belongs to the glycosyl hydrolase 13 family. GlgB subfamily. In terms of assembly, monomer.

The catalysed reaction is Transfers a segment of a (1-&gt;4)-alpha-D-glucan chain to a primary hydroxy group in a similar glucan chain.. It participates in glycan biosynthesis; glycogen biosynthesis. Catalyzes the formation of the alpha-1,6-glucosidic linkages in glycogen by scission of a 1,4-alpha-linked oligosaccharide from growing alpha-1,4-glucan chains and the subsequent attachment of the oligosaccharide to the alpha-1,6 position. This is 1,4-alpha-glucan branching enzyme GlgB 2 from Xanthomonas oryzae pv. oryzae (strain KACC10331 / KXO85).